A 629-amino-acid polypeptide reads, in one-letter code: Ribosomal protein S6 kinase 2 beta (629 aa).

The 260-residue stretch at 62-321 (FVLLKVLGQG…AEELKRHPFF (260 aa)) folds into the Protein kinase 1 domain. ATP is bound by residues 68 to 76 (LGQGSFGKV) and lysine 94. Residue aspartate 187 is the Proton acceptor of the active site. Position 221 is a phosphoserine (serine 221). The region spanning 322-391 (STIDWNKLYR…VAPVLVEEDA (70 aa)) is the AGC-kinase C-terminal domain. At threonine 359 the chain carries Phosphothreonine. Serine 363 bears the Phosphoserine mark. A Phosphoserine; by autocatalysis modification is found at serine 380. The region spanning 416–629 (YTVRETIGVG…PEEILARIGS (214 aa)) is the Protein kinase 2 domain. Residues 422–430 (IGVGSYSVC) and lysine 445 each bind ATP. Aspartate 533 (proton acceptor) is an active-site residue. Threonine 571 carries the phosphothreonine modification.

The protein belongs to the protein kinase superfamily. AGC Ser/Thr protein kinase family. S6 kinase subfamily. Mg(2+) is required as a cofactor. Autophosphorylated on Ser-380, as part of the activation process.

The catalysed reaction is L-seryl-[protein] + ATP = O-phospho-L-seryl-[protein] + ADP + H(+). It catalyses the reaction L-threonyl-[protein] + ATP = O-phospho-L-threonyl-[protein] + ADP + H(+). Its activity is regulated as follows. Activated by multiple phosphorylations on threonine and serine residues. Serine/threonine kinase that may play a role in mediating the growth-factor and stress induced activation of transcription. In Xenopus laevis (African clawed frog), this protein is Ribosomal protein S6 kinase 2 beta.